A 686-amino-acid chain; its full sequence is Protein SDA1 homolog (686 aa).

Phosphoserine occurs at positions 232, 234, and 236. Positions Lys254 to Met315 form a coiled coil. The tract at residues Leu484 to Asp508 is disordered. The span at Thr490 to Asp508 shows a compositional bias: acidic residues. Thr551 bears the Phosphothreonine mark. A disordered region spans residues Met563–Glu586. A phosphoserine mark is found at Ser584, Ser588, and Ser594. The disordered stretch occupies residues Lys604–Asn649.

The protein belongs to the SDA1 family.

The protein resides in the nucleus. Its subcellular location is the nucleolus. In terms of biological role, required for 60S pre-ribosomal subunits export to the cytoplasm. In Rattus norvegicus (Rat), this protein is Protein SDA1 homolog (Sdad1).